We begin with the raw amino-acid sequence, 164 residues long: Transcription factor E (164 aa).

In terms of domain architecture, HTH TFE/IIEalpha-type spans 5–87 (NDKVIRGYLL…LWRLDFSDIE (83 aa)).

The protein belongs to the TFE family. In terms of assembly, monomer. Interaction with RNA polymerase subunits RpoF and RpoE is necessary for Tfe stimulatory transcription activity. Able to interact with Tbp and RNA polymerase in the absence of DNA promoter. Interacts both with the preinitiation and elongation complexes.

Its function is as follows. Transcription factor that plays a role in the activation of archaeal genes transcribed by RNA polymerase. Facilitates transcription initiation by enhancing TATA-box recognition by TATA-box-binding protein (Tbp), and transcription factor B (Tfb) and RNA polymerase recruitment. Not absolutely required for transcription in vitro, but particularly important in cases where Tbp or Tfb function is not optimal. It dynamically alters the nucleic acid-binding properties of RNA polymerases by stabilizing the initiation complex and destabilizing elongation complexes. Seems to translocate with the RNA polymerase following initiation and acts by binding to the non template strand of the transcription bubble in elongation complexes. The sequence is that of Transcription factor E from Methanosarcina barkeri (strain Fusaro / DSM 804).